The sequence spans 445 residues: MDEEYEVIVLGTGLKECILSGLLSVDGLKVLHMDRNDYYGGESTSLNLNQLWKKFRGEEKAPAHLGSSRDYNVDMMPKFMMANGKLVRVLIHTDVTKYLSFKAVDGSYVFVQGKVQKVPATPMEALKSPLMGIFEKRRAGKFFSYVQEYDEKDPKTHDGMDLRRVTTKDLIAKFGLKEDTIDFIGHAVALHCNDNHLHQPAYDTVMRMKLYAESLARFQGGSPYIYPLYGLGELPQAFARLSAVYGGTYMLNKPECKVEFDEEGKVSGVTSEGETAKCKKVVCDPSYLTNKVRKIGRVARAIAIMSHPIPNTNDSQSVQVILPQKQLGRKSDMYVFCCSYSHNVAPKGKFIAFVSTDAETDNPQTELQPGIDLLGPVDELFFDIYDRYEPVNEPTLDNCFISTSYDATTHFDTTVVDVLNMYKLITGKELDLSVDLNAASAAEEE.

It belongs to the Rab GDI family. In terms of assembly, interacts with the GDP-bound form of RABA5C (via C-terminus). As to expression, expressed in roots, rosette leaves, stems, floral buds and siliques.

Regulates the GDP/GTP exchange reaction of most RAB proteins by inhibiting the dissociation of GDP from them, and the subsequent binding of GTP. The polypeptide is Guanosine nucleotide diphosphate dissociation inhibitor 1 (GDI1) (Arabidopsis thaliana (Mouse-ear cress)).